Reading from the N-terminus, the 500-residue chain is Mucin-like protein 3 (500 aa).

The first 27 residues, 1–27 (MAQPTSGLYSTFGFFICLLFFPASWEA), serve as a signal peptide directing secretion. Residues 28 to 429 (GANTFQELQK…GENNSFPVWA (402 aa)) lie on the Extracellular side of the membrane. Disordered regions lie at residues 55 to 198 (THRA…SQKP) and 275 to 324 (EGKT…PTAS). Over residues 58–71 (ASSDQKTSRQHPPD) the composition is skewed to basic and acidic residues. Over residues 76 to 89 (TATQKAKNQCNTTR) the composition is skewed to polar residues. A glycan (N-linked (GlcNAc...) asparagine) is linked at Asn108. Basic and acidic residues-rich tracts occupy residues 111–123 (VRHE…EKDL) and 132–142 (ARNERSADDPR). The N-linked (GlcNAc...) asparagine glycan is linked to Asn148. Polar residues-rich tracts occupy residues 159 to 178 (PRRN…TTKS), 279 to 289 (SPASESSSQAQ), and 298 to 324 (TSAS…PTAS). The helical transmembrane segment at 430-450 (IVIVILMAVIILLVFIGLILL) threads the bilayer. Residues 451 to 500 (VSCASRARHVLTQNSEEPEPQPEDKGSRNSYPVYLMEQQNLNLNQIPSPP) lie on the Cytoplasmic side of the membrane.

The protein localises to the cell membrane. Its subcellular location is the cytoplasm. Its function is as follows. May modulate NF-kappaB signaling and play a role in cell growth. In Mus musculus (Mouse), this protein is Mucin-like protein 3.